Here is a 615-residue protein sequence, read N- to C-terminus: Chaperone protein HscA (615 aa).

It belongs to the heat shock protein 70 family.

Its function is as follows. Chaperone involved in the maturation of iron-sulfur cluster-containing proteins. Has a low intrinsic ATPase activity which is markedly stimulated by HscB. Involved in the maturation of IscU. This Xenorhabdus nematophila (strain ATCC 19061 / DSM 3370 / CCUG 14189 / LMG 1036 / NCIMB 9965 / AN6) protein is Chaperone protein HscA.